The primary structure comprises 341 residues: UDP-3-O-acylglucosamine N-acyltransferase (341 aa).

H242 (proton acceptor) is an active-site residue.

The protein belongs to the transferase hexapeptide repeat family. LpxD subfamily. As to quaternary structure, homotrimer.

The enzyme catalyses a UDP-3-O-[(3R)-3-hydroxyacyl]-alpha-D-glucosamine + a (3R)-hydroxyacyl-[ACP] = a UDP-2-N,3-O-bis[(3R)-3-hydroxyacyl]-alpha-D-glucosamine + holo-[ACP] + H(+). The protein operates within bacterial outer membrane biogenesis; LPS lipid A biosynthesis. Its function is as follows. Catalyzes the N-acylation of UDP-3-O-acylglucosamine using 3-hydroxyacyl-ACP as the acyl donor. Is involved in the biosynthesis of lipid A, a phosphorylated glycolipid that anchors the lipopolysaccharide to the outer membrane of the cell. This Haemophilus influenzae (strain 86-028NP) protein is UDP-3-O-acylglucosamine N-acyltransferase.